Reading from the N-terminus, the 408-residue chain is LL-diaminopimelate aminotransferase (408 aa).

Substrate-binding residues include Tyr-15 and Gly-42. Residues Tyr-72, 108-109, Tyr-132, Asn-187, Tyr-218, and 246-248 contribute to the pyridoxal 5'-phosphate site; these read SK and SFS. Positions 109, 132, and 187 each coordinate substrate. Lys-249 carries the post-translational modification N6-(pyridoxal phosphate)lysine. 2 residues coordinate pyridoxal 5'-phosphate: Arg-257 and Asn-292. Residues Asn-292 and Arg-388 each contribute to the substrate site.

The protein belongs to the class-I pyridoxal-phosphate-dependent aminotransferase family. LL-diaminopimelate aminotransferase subfamily. In terms of assembly, homodimer. The cofactor is pyridoxal 5'-phosphate.

It catalyses the reaction (2S,6S)-2,6-diaminopimelate + 2-oxoglutarate = (S)-2,3,4,5-tetrahydrodipicolinate + L-glutamate + H2O + H(+). The protein operates within amino-acid biosynthesis; L-lysine biosynthesis via DAP pathway; LL-2,6-diaminopimelate from (S)-tetrahydrodipicolinate (aminotransferase route): step 1/1. Functionally, involved in the synthesis of meso-diaminopimelate (m-DAP or DL-DAP), required for both lysine and peptidoglycan biosynthesis. Catalyzes the direct conversion of tetrahydrodipicolinate to LL-diaminopimelate. This Synechococcus sp. (strain WH7803) protein is LL-diaminopimelate aminotransferase.